We begin with the raw amino-acid sequence, 252 residues long: Phosphate import ATP-binding protein PstB (252 aa).

In terms of domain architecture, ABC transporter spans 5-247; the sequence is VKIDKLNVHF…PEKKQTEDYI (243 aa). Position 37–44 (37–44) interacts with ATP; it reads GPSGCGKS.

Belongs to the ABC transporter superfamily. Phosphate importer (TC 3.A.1.7) family. In terms of assembly, the complex is composed of two ATP-binding proteins (PstB), two transmembrane proteins (PstC and PstA) and a solute-binding protein (PstS).

The protein localises to the cell inner membrane. The enzyme catalyses phosphate(out) + ATP + H2O = ADP + 2 phosphate(in) + H(+). Part of the ABC transporter complex PstSACB involved in phosphate import. Responsible for energy coupling to the transport system. The protein is Phosphate import ATP-binding protein PstB of Geobacter metallireducens (strain ATCC 53774 / DSM 7210 / GS-15).